A 179-amino-acid chain; its full sequence is DNA utilization protein HofN (179 aa).

Residues 19-39 (LRFWLLMFVAPLLLAVGITLI) traverse the membrane as a helical segment.

The protein localises to the cell inner membrane. Required for the use of extracellular DNA as a nutrient. The protein is DNA utilization protein HofN (hofN) of Escherichia coli (strain K12).